A 336-amino-acid polypeptide reads, in one-letter code: Cell division protein ZipA (336 aa).

The Periplasmic segment spans residues 1–2; sequence ME. Residues 3–23 form a helical membrane-spanning segment; it reads LHILFFILAGLLIAVLIGFSL. The Cytoplasmic portion of the chain corresponds to 24 to 336; the sequence is WSARREKSRI…SRQSYLARVS (313 aa). Residues 57–76 form a disordered region; the sequence is SLNPQSYAQTTGQHGETEAD. A compositionally biased stretch (polar residues) spans 59-70; the sequence is NPQSYAQTTGQH.

It belongs to the ZipA family. Interacts with FtsZ via their C-terminal domains.

The protein resides in the cell inner membrane. In terms of biological role, essential cell division protein that stabilizes the FtsZ protofilaments by cross-linking them and that serves as a cytoplasmic membrane anchor for the Z ring. Also required for the recruitment to the septal ring of downstream cell division proteins. The sequence is that of Cell division protein ZipA from Actinobacillus pleuropneumoniae serotype 7 (strain AP76).